A 964-amino-acid polypeptide reads, in one-letter code: Adhesion defective protein 3 (964 aa).

Positions 1 to 32 are disordered; sequence MADFMDIEPSSHSAKASQYESSAPASSSLGNS. A compositionally biased stretch (low complexity) spans 16 to 32; sequence ASQYESSAPASSSLGNS. In terms of domain architecture, LisH spans 34–66; that stretch reads PNESLDYYIYDYFVKHNFEEAAQAFLRESKIQI. Residues 69–83 are compositionally biased toward low complexity; the sequence is SSSSTAFSPSNNNAP. Disordered stretches follow at residues 69-125, 241-273, 476-523, 572-596, and 664-914; these read SSSS…EETN, PKGT…PASA, VSMK…TSRM, QTLS…MSMD, and APMI…KPIS. Polar residues-rich tracts occupy residues 93 to 103, 261 to 270, and 508 to 523; these read LASPSKISESI, AMQNPHNSFP, and TQAN…TSRM. Residues 575–589 are compositionally biased toward low complexity; it reads SSGNQPPQQSGPNPN. 6 stretches are compositionally biased toward polar residues: residues 664-700, 707-716, 724-752, 767-801, 818-828, and 857-868; these read APMI…TNRN, SPHQQFSPSA, RSMS…QNKE, AFPQ…SSLH, TIRTTERSTFS, and GGTNSISQDTTQ. Over residues 869–885 the composition is skewed to low complexity; the sequence is SLQMQSNSVNSSSMVDA. Positions 894–905 are enriched in polar residues; the sequence is GDTSALDSNAKN.

The protein belongs to the FLO8 family.

The protein localises to the cytoplasm. It is found in the nucleus. In terms of biological role, probable transcriptional regulator involved in cell adhesion. This Schizosaccharomyces pombe (strain 972 / ATCC 24843) (Fission yeast) protein is Adhesion defective protein 3 (adn3).